We begin with the raw amino-acid sequence, 372 residues long: Glutamate 5-kinase (372 aa).

Lysine 14 is a binding site for ATP. Substrate contacts are provided by serine 54, aspartate 141, and asparagine 153. ATP is bound by residues 173-174 and 215-221; these read TD and TGGMATK. The 79-residue stretch at 280–358 folds into the PUA domain; sequence RGQVVLDTGA…DNIEEILGYD (79 aa).

Belongs to the glutamate 5-kinase family.

The protein localises to the cytoplasm. The catalysed reaction is L-glutamate + ATP = L-glutamyl 5-phosphate + ADP. The protein operates within amino-acid biosynthesis; L-proline biosynthesis; L-glutamate 5-semialdehyde from L-glutamate: step 1/2. Functionally, catalyzes the transfer of a phosphate group to glutamate to form L-glutamate 5-phosphate. The polypeptide is Glutamate 5-kinase (Shewanella halifaxensis (strain HAW-EB4)).